A 186-amino-acid polypeptide reads, in one-letter code: ATP synthase subunit delta (186 aa).

This sequence belongs to the ATPase delta chain family. In terms of assembly, F-type ATPases have 2 components, F(1) - the catalytic core - and F(0) - the membrane proton channel. F(1) has five subunits: alpha(3), beta(3), gamma(1), delta(1), epsilon(1). F(0) has three main subunits: a(1), b(2) and c(10-14). The alpha and beta chains form an alternating ring which encloses part of the gamma chain. F(1) is attached to F(0) by a central stalk formed by the gamma and epsilon chains, while a peripheral stalk is formed by the delta and b chains.

Its subcellular location is the cell inner membrane. F(1)F(0) ATP synthase produces ATP from ADP in the presence of a proton or sodium gradient. F-type ATPases consist of two structural domains, F(1) containing the extramembraneous catalytic core and F(0) containing the membrane proton channel, linked together by a central stalk and a peripheral stalk. During catalysis, ATP synthesis in the catalytic domain of F(1) is coupled via a rotary mechanism of the central stalk subunits to proton translocation. Functionally, this protein is part of the stalk that links CF(0) to CF(1). It either transmits conformational changes from CF(0) to CF(1) or is implicated in proton conduction. The protein is ATP synthase subunit delta of Chelativorans sp. (strain BNC1).